The following is a 109-amino-acid chain: Hainantoxin-XVIII.2 (109 aa).

Residues 1 to 18 (MKLSIIIIVTSLVIAVVA) form the signal peptide. A propeptide spanning residues 19 to 46 (FPSKDSKAIENDKTEQRMEIVVQETARA) is cleaved from the precursor. Disulfide bonds link C47–C62, C55–C68, C59–C108, and C61–C81.

Belongs to the neurotoxin 25 family. F7 subfamily. Expressed by the venom gland.

It localises to the secreted. Functionally, putative ion channel inhibitor. The polypeptide is Hainantoxin-XVIII.2 (Cyriopagopus hainanus (Chinese bird spider)).